We begin with the raw amino-acid sequence, 332 residues long: Glycerol-3-phosphate dehydrogenase [NAD(P)+] (332 aa).

Ser15, Trp16, and Lys110 together coordinate NADPH. The sn-glycerol 3-phosphate site is built by Lys110, Gly137, and Ser139. Ala141 lines the NADPH pocket. Sn-glycerol 3-phosphate-binding residues include Lys192, Asp245, Ser255, Arg256, and Asn257. Lys192 serves as the catalytic Proton acceptor. Arg256 is a binding site for NADPH. Glu282 is an NADPH binding site.

This sequence belongs to the NAD-dependent glycerol-3-phosphate dehydrogenase family.

It is found in the cytoplasm. The enzyme catalyses sn-glycerol 3-phosphate + NAD(+) = dihydroxyacetone phosphate + NADH + H(+). The catalysed reaction is sn-glycerol 3-phosphate + NADP(+) = dihydroxyacetone phosphate + NADPH + H(+). Its pathway is membrane lipid metabolism; glycerophospholipid metabolism. Catalyzes the reduction of the glycolytic intermediate dihydroxyacetone phosphate (DHAP) to sn-glycerol 3-phosphate (G3P), the key precursor for phospholipid synthesis. This Coxiella burnetii (strain CbuG_Q212) (Coxiella burnetii (strain Q212)) protein is Glycerol-3-phosphate dehydrogenase [NAD(P)+].